The primary structure comprises 212 residues: Leucyl/phenylalanyl-tRNA--protein transferase (212 aa).

Belongs to the L/F-transferase family.

It localises to the cytoplasm. The catalysed reaction is N-terminal L-lysyl-[protein] + L-leucyl-tRNA(Leu) = N-terminal L-leucyl-L-lysyl-[protein] + tRNA(Leu) + H(+). The enzyme catalyses N-terminal L-arginyl-[protein] + L-leucyl-tRNA(Leu) = N-terminal L-leucyl-L-arginyl-[protein] + tRNA(Leu) + H(+). It catalyses the reaction L-phenylalanyl-tRNA(Phe) + an N-terminal L-alpha-aminoacyl-[protein] = an N-terminal L-phenylalanyl-L-alpha-aminoacyl-[protein] + tRNA(Phe). In terms of biological role, functions in the N-end rule pathway of protein degradation where it conjugates Leu, Phe and, less efficiently, Met from aminoacyl-tRNAs to the N-termini of proteins containing an N-terminal arginine or lysine. The sequence is that of Leucyl/phenylalanyl-tRNA--protein transferase from Flavobacterium johnsoniae (strain ATCC 17061 / DSM 2064 / JCM 8514 / BCRC 14874 / CCUG 350202 / NBRC 14942 / NCIMB 11054 / UW101) (Cytophaga johnsonae).